We begin with the raw amino-acid sequence, 239 residues long: MAINVIINGINGKIGRVVKENITAQSDLELVSGTGRQDDLAKTIQTTHADVVIDFTTPQSVFHNAEIIIQSGARPVIGTTGLTLEQIALLDKQCRNKKLGAIVAPNFSVGAVLMMKYAKEAAHYFPDVEIIEMHHSQKIDAPSGTAIKTAQMIGEMRSSKKDEPFKDRARGEIKNGIPIHSIRLPGLFSHQSVIFGSNGETLTIRHDGMDRNCTMPGIFMACRKVMELDYLVYGLENLL.

NAD(+) is bound by residues 9–14, 78–80, and 104–107; these read GINGKI, GTT, and APNF. The Proton donor/acceptor role is filled by H134. A (S)-2,3,4,5-tetrahydrodipicolinate-binding site is contributed by H135. The Proton donor role is filled by K138. 144–145 is a binding site for (S)-2,3,4,5-tetrahydrodipicolinate; the sequence is GT.

Belongs to the DapB family.

Its subcellular location is the cytoplasm. The enzyme catalyses (S)-2,3,4,5-tetrahydrodipicolinate + NAD(+) + H2O = (2S,4S)-4-hydroxy-2,3,4,5-tetrahydrodipicolinate + NADH + H(+). It catalyses the reaction (S)-2,3,4,5-tetrahydrodipicolinate + NADP(+) + H2O = (2S,4S)-4-hydroxy-2,3,4,5-tetrahydrodipicolinate + NADPH + H(+). Its pathway is amino-acid biosynthesis; L-lysine biosynthesis via DAP pathway; (S)-tetrahydrodipicolinate from L-aspartate: step 4/4. In terms of biological role, catalyzes the conversion of 4-hydroxy-tetrahydrodipicolinate (HTPA) to tetrahydrodipicolinate. This Coxiella burnetii (strain CbuG_Q212) (Coxiella burnetii (strain Q212)) protein is 4-hydroxy-tetrahydrodipicolinate reductase.